A 111-amino-acid polypeptide reads, in one-letter code: uncharacterized protein (111 aa).

Residues 18–41 (FFYFFFISFYTLWIVFFLLHLSFF) traverse the membrane as a helical segment.

It is found in the membrane. This is an uncharacterized protein from Saccharomyces cerevisiae (strain ATCC 204508 / S288c) (Baker's yeast).